We begin with the raw amino-acid sequence, 445 residues long: Ribosomal protein uS12 methylthiotransferase RimO (445 aa).

Residues 6–121 (KKVAVVTLGC…ILETLEEAEK (116 aa)) enclose the MTTase N-terminal domain. Cys15, Cys50, Cys84, Cys159, Cys163, and Cys166 together coordinate [4Fe-4S] cluster. Residues 145 to 375 (LSPKQYAYVK…MELQHDIAYE (231 aa)) form the Radical SAM core domain. The TRAM domain occupies 378 to 445 (QRWVGQTLKV…SYDLMGEVVQ (68 aa)).

It belongs to the methylthiotransferase family. RimO subfamily. It depends on [4Fe-4S] cluster as a cofactor.

The protein resides in the cytoplasm. The enzyme catalyses L-aspartate(89)-[ribosomal protein uS12]-hydrogen + (sulfur carrier)-SH + AH2 + 2 S-adenosyl-L-methionine = 3-methylsulfanyl-L-aspartate(89)-[ribosomal protein uS12]-hydrogen + (sulfur carrier)-H + 5'-deoxyadenosine + L-methionine + A + S-adenosyl-L-homocysteine + 2 H(+). Functionally, catalyzes the methylthiolation of an aspartic acid residue of ribosomal protein uS12. The chain is Ribosomal protein uS12 methylthiotransferase RimO from Desulfitobacterium hafniense (strain Y51).